The sequence spans 222 residues: 7-cyano-7-deazaguanine synthase (222 aa).

8–18 (LSGGLDSATCL) is a binding site for ATP. 4 residues coordinate Zn(2+): Cys-187, Cys-197, Cys-200, and Cys-203.

This sequence belongs to the QueC family. The cofactor is Zn(2+).

The enzyme catalyses 7-carboxy-7-deazaguanine + NH4(+) + ATP = 7-cyano-7-deazaguanine + ADP + phosphate + H2O + H(+). Its pathway is purine metabolism; 7-cyano-7-deazaguanine biosynthesis. Its function is as follows. Catalyzes the ATP-dependent conversion of 7-carboxy-7-deazaguanine (CDG) to 7-cyano-7-deazaguanine (preQ(0)). This is 7-cyano-7-deazaguanine synthase from Alcanivorax borkumensis (strain ATCC 700651 / DSM 11573 / NCIMB 13689 / SK2).